We begin with the raw amino-acid sequence, 169 residues long: Lipoprotein signal peptidase (169 aa).

4 helical membrane passes run 15-35 (WLWL…VVMN), 47-67 (ILPF…SFLS), 75-95 (WLFT…MSKL), and 107-127 (AMII…GFVV). Catalysis depends on residues D128 and D146. The helical transmembrane segment at 141 to 161 (AFNLADMAICLGAAMIILDGF) threads the bilayer.

This sequence belongs to the peptidase A8 family.

The protein localises to the cell inner membrane. The catalysed reaction is Release of signal peptides from bacterial membrane prolipoproteins. Hydrolyzes -Xaa-Yaa-Zaa-|-(S,diacylglyceryl)Cys-, in which Xaa is hydrophobic (preferably Leu), and Yaa (Ala or Ser) and Zaa (Gly or Ala) have small, neutral side chains.. It functions in the pathway protein modification; lipoprotein biosynthesis (signal peptide cleavage). This protein specifically catalyzes the removal of signal peptides from prolipoproteins. The polypeptide is Lipoprotein signal peptidase (Vibrio parahaemolyticus serotype O3:K6 (strain RIMD 2210633)).